We begin with the raw amino-acid sequence, 161 residues long: Regulator of ribonuclease activity A (161 aa).

It belongs to the RraA family. As to quaternary structure, homotrimer. Binds to both RNA-binding sites in the C-terminal region of Rne and to RhlB.

The protein localises to the cytoplasm. Globally modulates RNA abundance by binding to RNase E (Rne) and regulating its endonucleolytic activity. Can modulate Rne action in a substrate-dependent manner by altering the composition of the degradosome. Modulates RNA-binding and helicase activities of the degradosome. The sequence is that of Regulator of ribonuclease activity A from Enterobacter sp. (strain 638).